Here is a 362-residue protein sequence, read N- to C-terminus: Endopolygalacturonase II (362 aa).

Residues 1 to 20 form the signal peptide; that stretch reads MHSFASLLRYGLAAGATLAS. A propeptide spanning residues 21-27 is cleaved from the precursor; it reads ASPIEAR. A disulfide bridge connects residues Cys30 and Cys45. The stretch at 156–186 is one PbH1 1 repeat; that stretch reads SDDITLTDITINNADGDSLGGHNTDAFDVGN. Catalysis depends on Asp201, which acts as the Proton donor. Residues Cys203 and Cys219 are joined by a disulfide bond. PbH1 repeat units lie at residues 209–229, 238–259, 267–289, and 301–322; these read GENI…SIGS, VKNV…RIKT, VSEI…VIQQ, and TNGV…DSKA. His223 is an active-site residue. Asn240 is a glycosylation site (N-linked (GlcNAc...) asparagine). 2 disulfide bridges follow: Cys329/Cys334 and Cys353/Cys362.

This sequence belongs to the glycosyl hydrolase 28 family.

The protein resides in the secreted. The enzyme catalyses (1,4-alpha-D-galacturonosyl)n+m + H2O = (1,4-alpha-D-galacturonosyl)n + (1,4-alpha-D-galacturonosyl)m.. Its function is as follows. Involved in maceration and soft-rotting of plant tissue. Hydrolyzes the 1,4-alpha glycosidic bonds of de-esterified pectate in the smooth region of the plant cell wall. The polypeptide is Endopolygalacturonase II (pgaII) (Aspergillus awamori (Black koji mold)).